Here is a 382-residue protein sequence, read N- to C-terminus: Succinyl-diaminopimelate desuccinylase (382 aa).

Residue histidine 68 participates in Zn(2+) binding. Aspartate 70 is a catalytic residue. Aspartate 101 serves as a coordination point for Zn(2+). The active-site Proton acceptor is glutamate 135. Zn(2+) contacts are provided by glutamate 136, glutamate 164, and histidine 350.

The protein belongs to the peptidase M20A family. DapE subfamily. As to quaternary structure, homodimer. Zn(2+) serves as cofactor. Co(2+) is required as a cofactor.

The catalysed reaction is N-succinyl-(2S,6S)-2,6-diaminopimelate + H2O = (2S,6S)-2,6-diaminopimelate + succinate. Its pathway is amino-acid biosynthesis; L-lysine biosynthesis via DAP pathway; LL-2,6-diaminopimelate from (S)-tetrahydrodipicolinate (succinylase route): step 3/3. Its function is as follows. Catalyzes the hydrolysis of N-succinyl-L,L-diaminopimelic acid (SDAP), forming succinate and LL-2,6-diaminopimelate (DAP), an intermediate involved in the bacterial biosynthesis of lysine and meso-diaminopimelic acid, an essential component of bacterial cell walls. The protein is Succinyl-diaminopimelate desuccinylase of Acidithiobacillus ferrooxidans (strain ATCC 23270 / DSM 14882 / CIP 104768 / NCIMB 8455) (Ferrobacillus ferrooxidans (strain ATCC 23270)).